The sequence spans 488 residues: Cobyric acid synthase (488 aa).

Positions 248–441 constitute a GATase cobBQ-type domain; sequence VLRVVVPALP…VHGLFDTPAA (194 aa). The active-site Nucleophile is the C328. H433 is a catalytic residue.

The protein belongs to the CobB/CobQ family. CobQ subfamily.

It participates in cofactor biosynthesis; adenosylcobalamin biosynthesis. Functionally, catalyzes amidations at positions B, D, E, and G on adenosylcobyrinic A,C-diamide. NH(2) groups are provided by glutamine, and one molecule of ATP is hydrogenolyzed for each amidation. The protein is Cobyric acid synthase of Burkholderia vietnamiensis (strain G4 / LMG 22486) (Burkholderia cepacia (strain R1808)).